Consider the following 353-residue polypeptide: N-terminal EF-hand calcium-binding protein 3 (353 aa).

One can recognise an EF-hand domain in the interval 27–62 (AGHALFQDVFRRADKNDDGKLSFEEFQNYFADGVLS). The Ca(2+) site is built by D40, N42, D44, K46, and E51. The tract at residues 172–181 (IKAQSRPCGS) is required for interaction with APBA3. Residues 193 to 203 (SWSPSWSPGSS) are compositionally biased toward low complexity. Residues 193–213 (SWSPSWSPGSSDTGRSSEAEQ) are disordered. Residues 204 to 213 (DTGRSSEAEQ) show a composition bias toward polar residues. The ABM domain occupies 253–342 (LVAQRQVQVA…QAPDTLTTVF (90 aa)).

Interacts with the N-terminal domain of APBA2. Interacts with NEK2. Interacts with APBA3; APBA3 seems to mediate the interaction between NECAB3 and HIF1AN. Phosphorylated by NEK2. As to expression, widely expressed, with highest levels in the brain.

Its subcellular location is the golgi apparatus. In terms of biological role, inhibits the interaction of APBA2 with amyloid-beta precursor protein (APP), and hence allows formation of amyloid-beta. May enhance the activity of HIF1A and thus promote glycolysis under normoxic conditions; the function requires its ABM domain and may implicate the stabilization of the interaction between HIF1AN and APBA3. The polypeptide is N-terminal EF-hand calcium-binding protein 3 (Necab3) (Mus musculus (Mouse)).